Here is a 107-residue protein sequence, read N- to C-terminus: Large ribosomal subunit protein P1 (107 aa).

The span at 67–82 shows a compositional bias: low complexity; that stretch reads GPASAAPAGAAGAAAP. Residues 67 to 107 form a disordered region; it reads GPASAAPAGAAGAAAPAEEKAEEKEEEKEESDEDMGFGLFD. Acidic residues predominate over residues 90-101; it reads KEEEKEESDEDM.

The protein belongs to the eukaryotic ribosomal protein P1/P2 family. In terms of assembly, P1 and P2 exist as dimers at the large ribosomal subunit.

The protein localises to the cytoplasm. Its function is as follows. Plays an important role in the elongation step of protein synthesis. The sequence is that of Large ribosomal subunit protein P1 from Penicillium crustosum (Blue mold fungus).